The following is a 203-amino-acid chain: Phosphatidylglycerophosphatase B (203 aa).

A topological domain (cytoplasmic) is located at residue Met-1. The helical transmembrane segment at 2–17 (YKPVSLFLFFLILAAA) threads the bilayer. Topologically, residues 18–55 (IHTNAVQSADEAISKAAVLIRQPWLNEVMTGITHLGAS) are extracellular. Residues 56 to 74 (SFLLPLIVIIGAGMFFYRK) traverse the membrane as a helical segment. Over 75-78 (TWDG) the chain is Cytoplasmic. Residues 79 to 99 (LLMLLVFGTDRLLNKVLKEWI) traverse the membrane as a helical segment. The interval 96 to 104 (KEWIERVRP) is phosphatase sequence motif I. At 100-119 (ERVRPDFAPLVHESSFSFPS) the chain is on the extracellular side. A phosphatase sequence motif II region spans residues 118–121 (PSGH). A helical membrane pass occupies residues 120 to 139 (GHSMNAACVYPVIAYFLVKH). His-121 acts as the Proton donors in catalysis. Residues 140–146 (LPFLSKH) are Cytoplasmic-facing. Residues 147–167 (KKMVYIIAGVIAVLVGISRVY) traverse the membrane as a helical segment. Residues 164 to 175 (SRVYLGVHFVTD) are phosphatase sequence motif III. The Extracellular segment spans residues 168–172 (LGVHF). Residue His-171 is the Nucleophile of the active site. Residues 173–196 (VTDVLGGFSLGLLLFFLVKGFDEK) traverse the membrane as a helical segment. Residues 197–203 (IKRFRQK) are Cytoplasmic-facing.

This sequence belongs to the PA-phosphatase related phosphoesterase family.

The protein resides in the cell membrane. The enzyme catalyses a 1,2-diacyl-sn-glycero-3-phospho-(1'-sn-glycero-3'-phosphate) + H2O = a 1,2-diacyl-sn-glycero-3-phospho-(1'-sn-glycerol) + phosphate. Its function is as follows. Catalyzes the dephosphorylation of phosphatidylglycerophosphate (PGP) to phosphatidylglycerol. Also has undecaprenyl pyrophosphate phosphatase activity, required for the biosynthesis of the lipid carrier undecaprenyl phosphate. The chain is Phosphatidylglycerophosphatase B from Bacillus subtilis (strain 168).